The primary structure comprises 55 residues: Glycine-rich antimicrobial peptide Pg-AMP (55 aa).

Residues 18–39 are compositionally biased toward gly residues; the sequence is GYGGYGGGRYGGGYGSGRGQPV. Positions 18–55 are disordered; sequence GYGGYGGGRYGGGYGSGRGQPVGQGVERSHDDNRNQPR. A compositionally biased stretch (basic and acidic residues) spans 44–55; sequence ERSHDDNRNQPR.

Monomer and homodimer. Might act by homodimer formation.

Has antibacterial activity against the Gram-negative bacteria Klebsiella sp., Proteus sp., E.coli ATCC 8739 (MIC=72 ug/ml) and K.pneumoniae (MIC=32 ug/ml). Has no activity against the Gram-negative bacterium S.typhimurium or the Gram-positive bacterium S.aureus. Does not have antifungal activity against the human and plant pathogenic fungi F.oxysporum, A.fumigatus and R.solani. This Psidium guajava (Guava) protein is Glycine-rich antimicrobial peptide Pg-AMP.